Here is a 529-residue protein sequence, read N- to C-terminus: Auxin response factor 13 (529 aa).

The tract at residues 1-22 (MARPPAATAPPPPPPPPPPPPP) is disordered. The span at 7–22 (ATAPPPPPPPPPPPPP) shows a compositional bias: pro residues. Positions 128–234 (YAKQLTQSDA…KLLVGVRRAA (107 aa)) form a DNA-binding region, TF-B3. 2 disordered regions span residues 443–462 (IVTP…PLSA) and 497–529 (PEGV…GARL). Over residues 444–461 (VTPQNGSPPDNPVNTPLS) the composition is skewed to polar residues. The segment covering 499–510 (GVDDETATEEAS) has biased composition (acidic residues). Residues 511-523 (DTSLPDSLTNGHN) are compositionally biased toward polar residues.

Belongs to the ARF family. In terms of assembly, homo and heterodimers. As to expression, expressed in roots, culms, leaves and young panicles.

The protein resides in the nucleus. In terms of biological role, auxin response factors (ARFs) are transcriptional factors that bind specifically to the DNA sequence 5'-TGTCTC-3' found in the auxin-responsive promoter elements (AuxREs). In Oryza sativa subsp. japonica (Rice), this protein is Auxin response factor 13 (ARF13).